We begin with the raw amino-acid sequence, 38 residues long: Large ribosomal subunit protein bL36 (38 aa).

This sequence belongs to the bacterial ribosomal protein bL36 family.

This chain is Large ribosomal subunit protein bL36, found in Porphyromonas gingivalis (strain ATCC 33277 / DSM 20709 / CIP 103683 / JCM 12257 / NCTC 11834 / 2561).